A 187-amino-acid polypeptide reads, in one-letter code: Aminodeoxychorismate synthase component 2 (187 aa).

The 187-residue stretch at 1 to 187 folds into the Glutamine amidotransferase type-1 domain; it reads MILLIDNYDS…HQLLANFLHR (187 aa). Catalysis depends on residues Cys79, His168, and Glu170.

Monomer. Heterodimer consisting of two non-identical subunits: a glutamine amidotransferase subunit (PabA) and a aminodeoxychorismate synthase subunit (PabB).

The catalysed reaction is chorismate + L-glutamine = 4-amino-4-deoxychorismate + L-glutamate. It functions in the pathway cofactor biosynthesis; tetrahydrofolate biosynthesis; 4-aminobenzoate from chorismate: step 1/2. Its activity is regulated as follows. Inhibited by 6-diazo-5-oxo-L-norleucine (DON). The inhibition is competitive with glutamine, but uncompetitive with chorismate. Its function is as follows. Part of a heterodimeric complex that catalyzes the two-step biosynthesis of 4-amino-4-deoxychorismate (ADC), a precursor of p-aminobenzoate (PABA) and tetrahydrofolate. In the first step, a glutamine amidotransferase (PabA) generates ammonia as a substrate that, along with chorismate, is used in the second step, catalyzed by aminodeoxychorismate synthase (PabB) to produce ADC. PabA converts glutamine into glutamate only in the presence of stoichiometric amounts of PabB. This Escherichia coli (strain K12) protein is Aminodeoxychorismate synthase component 2.